A 225-amino-acid chain; its full sequence is Phosphoserine phosphatase (225 aa).

Met-1 carries the N-acetylmethionine modification. Asp-20 acts as the Nucleophile in catalysis. Mg(2+) is bound by residues Asp-20 and Asp-22. Residue 20 to 22 participates in L-serine binding; the sequence is DVD. The Proton donor role is filled by Asp-22. Met-52 is an O-phospho-L-serine binding site. Residue Gly-53 coordinates phosphate. L-serine contacts are provided by residues 109-111 and Lys-158; that span reads SGG. Residues 109 to 111 and Lys-158 each bind O-phospho-L-serine; that span reads SGG. Asp-179 serves as a coordination point for Mg(2+). Thr-182 is an O-phospho-L-serine binding site. Thr-182 contributes to the phosphate binding site.

The protein belongs to the HAD-like hydrolase superfamily. SerB family. As to quaternary structure, homodimer. It depends on Mg(2+) as a cofactor.

It is found in the cytoplasm. The protein resides in the cytosol. It carries out the reaction O-phospho-L-serine + H2O = L-serine + phosphate. The enzyme catalyses O-phospho-D-serine + H2O = D-serine + phosphate. The protein operates within amino-acid biosynthesis; L-serine biosynthesis; L-serine from 3-phospho-D-glycerate: step 3/3. Its activity is regulated as follows. Inhibited by calcium ions. Catalyzes the last irreversible step in the biosynthesis of L-serine from carbohydrates, the dephosphorylation of O-phospho-L-serine to L-serine. L-serine can then be used in protein synthesis, to produce other amino acids, in nucleotide metabolism or in glutathione synthesis, or can be racemized to D-serine, a neuromodulator. May also act on O-phospho-D-serine. The protein is Phosphoserine phosphatase of Homo sapiens (Human).